The primary structure comprises 54 residues: Putative collagen-like domain-containing protein 065L (54 aa).

The interval 1 to 54 (MRGLEAPGAVGPTGPSGAPGSQGPDGDVGGMGPEGPKGDDGPVGPKGPQGAAIF) is disordered. The region spanning 7–51 (PGAVGPTGPSGAPGSQGPDGDVGGMGPEGPKGDDGPVGPKGPQGA) is the Collagen-like domain. The segment covering 26–35 (GDVGGMGPEG) has biased composition (gly residues). The span at 42–54 (PVGPKGPQGAAIF) shows a compositional bias: low complexity.

In Dryophytes versicolor (chameleon treefrog), this protein is Putative collagen-like domain-containing protein 065L.